Here is a 494-residue protein sequence, read N- to C-terminus: Alpha-amylase-related protein (494 aa).

Residues 1–20 (MIKFALALTLCLAGASLSLA) form the signal peptide. A Pyrrolidone carboxylic acid modification is found at Gln21. Cys48 and Cys104 are oxidised to a cystine. 3 residues coordinate Ca(2+): Asn118, Gln169, and Asp178. Cys157 and Cys171 are disulfide-bonded. Residue Arg206 coordinates chloride. Asp208 acts as the Nucleophile in catalysis. His212 contacts Ca(2+). Catalysis depends on Glu245, which acts as the Proton donor. Chloride contacts are provided by Asn308 and Arg343. 3 disulfides stabilise this stretch: Cys376–Cys382, Cys418–Cys441, and Cys448–Cys460.

This sequence belongs to the glycosyl hydrolase 13 family. In terms of assembly, monomer. Ca(2+) is required as a cofactor. The cofactor is chloride.

The protein resides in the secreted. It carries out the reaction Endohydrolysis of (1-&gt;4)-alpha-D-glucosidic linkages in polysaccharides containing three or more (1-&gt;4)-alpha-linked D-glucose units.. The polypeptide is Alpha-amylase-related protein (Amyrel) (Drosophila bakoue (Fruit fly)).